A 142-amino-acid polypeptide reads, in one-letter code: uncharacterized protein (142 aa).

Belongs to the IIV-6 115R family.

This is an uncharacterized protein from Invertebrate iridescent virus 3 (IIV-3).